Consider the following 150-residue polypeptide: Transcriptional regulator MraZ (150 aa).

2 consecutive SpoVT-AbrB domains span residues 7 to 58 and 87 to 130; these read KEQH…EPEI and LDSV…SPEK.

This sequence belongs to the MraZ family. Forms oligomers.

The protein resides in the cytoplasm. It is found in the nucleoid. The protein is Transcriptional regulator MraZ of Chlorobium phaeobacteroides (strain BS1).